A 161-amino-acid chain; its full sequence is 18.1 kDa class I heat shock protein (161 aa).

The region spanning 47–161 (ETAAFAGARI…PDVKSIQVTG (115 aa)) is the sHSP domain.

Belongs to the small heat shock protein (HSP20) family. May form oligomeric structures.

The protein resides in the cytoplasm. The chain is 18.1 kDa class I heat shock protein (HSP18.1) from Oryza sativa subsp. japonica (Rice).